The sequence spans 369 residues: Tyrosinase-like protein orsC (369 aa).

A signal peptide spans 1 to 23 (MLAFNPLVTALAALIFLFCQANA). Cu cation is bound by residues H112 and H121. N-linked (GlcNAc...) asparagine glycans are attached at residues N165, N179, N253, and N272. H315 is a Cu cation binding site.

It functions in the pathway secondary metabolite biosynthesis. Tyrosinase-like protein; part of the gene cluster that mediates the biosynthesis of orsellinic acid, as well as of the cathepsin K inhibitors F9775 A and F9775 B. The non-reducing polyketide synthase orsA produces orsellinic acid by condensing acetyl-CoA with 3 malonyl-CoA units. Further modifications by the decarboxylase orsB and the tyrosinase-like protein orsC lead to the production of F9775 A and F9775 B. The functions of orsD and orsE remain unclear since only orsB and orsC are required to convert orsellinic acid into F9775 A and F9775 B. This is Tyrosinase-like protein orsC from Emericella nidulans (strain FGSC A4 / ATCC 38163 / CBS 112.46 / NRRL 194 / M139) (Aspergillus nidulans).